Here is a 145-residue protein sequence, read N- to C-terminus: UPF0260 protein VV2402 (145 aa).

The protein belongs to the UPF0260 family.

This is UPF0260 protein VV2402 from Vibrio vulnificus (strain YJ016).